We begin with the raw amino-acid sequence, 1584 residues long: Sterile alpha motif domain-containing protein 9-like (1584 aa).

Residues 14–79 (WTKEHVKKWV…RSYNKLNSKS (66 aa)) enclose the SAM domain. Residues 76-122 (NSKSPESDNHDPGQLDNSKPSKTEHQKNPKHTKKEEENSMSSNIDYD) form a disordered region. The segment covering 80-112 (PESDNHDPGQLDNSKPSKTEHQKNPKHTKKEEE) has biased composition (basic and acidic residues).

In terms of assembly, interacts with EEA1. Widely expressed in adult and fetal tissues. Expressed in the cerebellum. Variable expression in tumors. Down-regulated in breast cancer.

The protein resides in the early endosome. It is found in the mitochondrion. Its function is as follows. May be involved in endosome fusion. Mediates down-regulation of growth factor signaling via internalization of growth factor receptors. The protein is Sterile alpha motif domain-containing protein 9-like (SAMD9L) of Homo sapiens (Human).